The primary structure comprises 130 residues: Holo-[acyl-carrier-protein] synthase (130 aa).

Mg(2+)-binding residues include Asp9 and Glu58.

The protein belongs to the P-Pant transferase superfamily. AcpS family. Requires Mg(2+) as cofactor.

The protein resides in the cytoplasm. The catalysed reaction is apo-[ACP] + CoA = holo-[ACP] + adenosine 3',5'-bisphosphate + H(+). Functionally, transfers the 4'-phosphopantetheine moiety from coenzyme A to a Ser of acyl-carrier-protein. The sequence is that of Holo-[acyl-carrier-protein] synthase from Mycobacterium bovis (strain ATCC BAA-935 / AF2122/97).